Here is a 155-residue protein sequence, read N- to C-terminus: Transcription antitermination protein NusB (155 aa).

It belongs to the NusB family.

Involved in transcription antitermination. Required for transcription of ribosomal RNA (rRNA) genes. Binds specifically to the boxA antiterminator sequence of the ribosomal RNA (rrn) operons. In Ralstonia pickettii (strain 12J), this protein is Transcription antitermination protein NusB.